A 282-amino-acid polypeptide reads, in one-letter code: Probable metal transport system membrane protein TM_0125 (282 aa).

Helical transmembrane passes span Ala33 to Phe53, Phe58 to Gly78, Ala79 to Phe99, Ala109 to Gly129, Ser148 to Phe168, Phe184 to Val204, Val210 to Phe230, Phe234 to Leu254, and Leu259 to Leu279.

It belongs to the ABC-3 integral membrane protein family.

It is found in the cell inner membrane. Part of an ATP-driven transport system TM_0123/TM_0124/TM_0125 for a metal. In Thermotoga maritima (strain ATCC 43589 / DSM 3109 / JCM 10099 / NBRC 100826 / MSB8), this protein is Probable metal transport system membrane protein TM_0125.